A 153-amino-acid polypeptide reads, in one-letter code: UPF0251 protein Daud_0090 (153 aa).

Over residues 129–138 the composition is skewed to basic and acidic residues; that stretch reads ELMTRPERCS. Residues 129–153 form a disordered region; the sequence is ELMTRPERCSRPKRGAGKYRVPKKR. Positions 139-153 are enriched in basic residues; that stretch reads RPKRGAGKYRVPKKR.

It belongs to the UPF0251 family.

The polypeptide is UPF0251 protein Daud_0090 (Desulforudis audaxviator (strain MP104C)).